Consider the following 613-residue polypeptide: Histone acetyltransferase KAT7 (613 aa).

Residues 1-175 (MAIGVVKRNA…SDLSHRPKRR (175 aa)) are disordered. Phosphoserine occurs at positions 12, 52, 55, 59, and 66. The segment covering 44 to 59 (VTRSSARLSQSSQDSS) has biased composition (low complexity). Residues Thr87 and Thr90 each carry the phosphothreonine modification. The span at 98-107 (QTRSSGSETE) shows a compositional bias: polar residues. Residue Ser104 is modified to Phosphoserine. Phosphothreonine is present on Thr106. Basic and acidic residues predominate over residues 112–127 (FSDRETKNTADHDESP). 2 positions are modified to phosphoserine: Ser113 and Ser126. Thr130 carries the phosphothreonine modification. The span at 136–147 (PSSESDIDISSP) shows a compositional bias: low complexity. Over residues 150–170 (SHDESIAKDMSLKDSGSDLSH) the composition is skewed to basic and acidic residues. Ser160, Ser164, Ser166, and Ser180 each carry phosphoserine. Residues 178–221 (HESYNFNMKCPTPGCNSLGHLTGKHERHFSISGCPLYHNLSADE) form a CCHHC-type zinc finger. N6-acetyllysine is present on residues Lys201 and Lys279. Residue Lys325 forms a Glycyl lysine isopeptide (Lys-Gly) (interchain with G-Cter in SUMO2) linkage. The region spanning 334 to 609 (EGSNMIKTIA…MDPSCLKWTP (276 aa)) is the MYST-type HAT domain. Lys340 is covalently cross-linked (Glycyl lysine isopeptide (Lys-Gly) (interchain with G-Cter in ubiquitin)). Residues 367 to 392 (LYMCEFCLKYMKSQTILRRHMAKCVW) form a C2HC MYST-type zinc finger. Residues Cys370, Cys373, His386, and Cys390 each contribute to the Zn(2+) site. At Lys434 the chain carries N6-acetyllysine; by autocatalysis. Acetyl-CoA is bound by residues 477-479 (ILT) and 485-490 (RQGYGK). Residue Ser508 is modified to Phosphoserine. Residue Glu510 is the Proton donor/acceptor of the active site. Positions 514 and 523 each coordinate acetyl-CoA.

It belongs to the MYST (SAS/MOZ) family. Component of the HBO1 complex composed of KAT7/HBO1, MEAF6, ING4 or ING5, and one scaffold subunit: complexes containing BRPF scaffold (BRPF1, BRD1/BRPF2 or BRPF3) direct KAT7/HBO1 specificity towards H3K14ac, while complexes containing JADE scaffold (JADE1, JADE2 and JADE3) mediate acetylation of histone H4. Interacts with MCM2 and ORC1. Interacts with the androgen receptor (AR) in the presence of dihydrotestosterone. Interacts with CDT1. Interacts with MAP2K1 and CUL1. Interacts with p53/TP53; leading to inhibit histone acetyltransferase activity. Phosphorylated at Ser-52 and Ser-55 by ATR in response to DNA damage, promoting its ubiquitination by the CRL4(DDB2) complex and subsequent degradation. Phosphorylation at Ser-52 and Ser-55 by ATR in response to ultraviolet-induced DNA, promotes localization to DNA damage sites. Phosphorylation at Ser-59 by PLK1 during mitosis seems important for prereplicative complex formation and DNA replication licensing, and requires prior phosphorylation at Thr-87 and Thr-90 by CDK1. Phosphorylated by MAP2K1, which accelerates its degradation. In terms of processing, ubiquitinated at Lys-340, leading to proteasomal degradation. Ubiquitinated by the CRL4(DDB2) complex following phosphorylation by ATR, leading to its subsequent degradation. Post-translationally, autoacetylation at Lys-434 is required for proper function. As to expression, widely expressed in adult tissues.

It is found in the nucleus. The protein localises to the chromosome. Its subcellular location is the centromere. The protein resides in the cytoplasm. It localises to the cytosol. The catalysed reaction is L-lysyl-[protein] + acetyl-CoA = N(6)-acetyl-L-lysyl-[protein] + CoA + H(+). Its activity is regulated as follows. Histone acetyltransferase activity is inhibited by GMNN in the context of a complex with CDT1, inhibiting histone H4 acetylation and DNA replication licensing. In terms of biological role, catalytic subunit of histone acetyltransferase HBO1 complexes, which specifically mediate acetylation of histone H3 at 'Lys-14' (H3K14ac), thereby regulating various processes, such as gene transcription, protein ubiquitination, immune regulation, stem cell pluripotent and self-renewal maintenance and embryonic development. Some complexes also catalyze acetylation of histone H4 at 'Lys-5', 'Lys-8' and 'Lys-12' (H4K5ac, H4K8ac and H4K12ac, respectively), regulating DNA replication initiation, regulating DNA replication initiation. Specificity of the HBO1 complexes is determined by the scaffold subunit: complexes containing BRPF scaffold (BRPF1, BRD1/BRPF2 or BRPF3) direct KAT7/HBO1 specificity towards H3K14ac, while complexes containing JADE (JADE1, JADE2 and JADE3) scaffold direct KAT7/HBO1 specificity towards histone H4. H3K14ac promotes transcriptional elongation by facilitating the processivity of RNA polymerase II. Acts as a key regulator of hematopoiesis by forming a complex with BRD1/BRPF2, directing KAT7/HBO1 specificity towards H3K14ac and promoting erythroid differentiation. H3K14ac is also required for T-cell development. KAT7/HBO1-mediated acetylation facilitates two consecutive steps, licensing and activation, in DNA replication initiation: H3K14ac facilitates the activation of replication origins, and histone H4 acetylation (H4K5ac, H4K8ac and H4K12ac) facilitates chromatin loading of MCM complexes, promoting DNA replication licensing. Acts as a positive regulator of centromeric CENPA assembly: recruited to centromeres and mediates histone acetylation, thereby preventing centromere inactivation mediated by SUV39H1, possibly by increasing histone turnover/exchange. Involved in nucleotide excision repair: phosphorylation by ATR in response to ultraviolet irradiation promotes its localization to DNA damage sites, where it mediates histone acetylation to facilitate recruitment of XPC at the damaged DNA sites. Acts as an inhibitor of NF-kappa-B independently of its histone acetyltransferase activity. Its function is as follows. Plays a central role in the maintenance of leukemia stem cells in acute myeloid leukemia (AML). Acts by mediating acetylation of histone H3 at 'Lys-14' (H3K14ac), thereby facilitating the processivity of RNA polymerase II to maintain the high expression of key genes, such as HOXA9 and HOXA10 that help to sustain the functional properties of leukemia stem cells. The chain is Histone acetyltransferase KAT7 from Mus musculus (Mouse).